Reading from the N-terminus, the 694-residue chain is U-box domain-containing protein 1 (694 aa).

Residues 292–366 enclose the U-box domain; the sequence is NIPDEFRCPI…HQWCYENNVK (75 aa). ARM repeat units lie at residues 392–432, 435–474, 476–516, 519–558, 560–599, 601–641, and 646–685; these read SENK…LLAK, MDNRRIIAEVGAIPFLVTLLVSKDSRIQEHVVTALFNLSI, DNNK…SLSM, DCKVQIGASSRAIPALVGLLKEGTIIGKRDAATALFNLAV, NPNKLSIVKSGAVTLLVELLMDDKAGITDDSLAVLAVLLG, SEGL…GLCK, and LVAMRLLANPRSIPSLQSLAADGSLRARRKADALLRLLNR.

Interacts with LYK3. Binds to NORK/DMI2. Post-translationally, phosphorylated by LYK3 in vitro. Phosphorylated by NORK/DMI2. As to expression, present ubiquitously at very low levels during nonsymbiotic growth. Accumulates in roots and nodules during symbiotic growth with rhizobia and mycorrhiza.

It is found in the cell membrane. It carries out the reaction S-ubiquitinyl-[E2 ubiquitin-conjugating enzyme]-L-cysteine + [acceptor protein]-L-lysine = [E2 ubiquitin-conjugating enzyme]-L-cysteine + N(6)-ubiquitinyl-[acceptor protein]-L-lysine.. The protein operates within protein modification; protein ubiquitination. Its function is as follows. Exhibits U-box-dependent E3 ubiquitin ligase activity in vitro. Negatively modulates successive stages of infection and development of rhizobial (e.g. Sinorhizobium meliloti) and arbuscular mycorrhizal fungi (AM, e.g. Rhizophagus irregularis) symbioses, in an ubiquitin ligase activity-dependent manner. Negative regulator of the LYK3 signaling pathway leading to nitrogen-fixing symbiosis (e.g. infection and nodulation) by rhizobia. May be involved in the discrimination of rhizobium strains producing variant Nod factors. The chain is U-box domain-containing protein 1 from Medicago truncatula (Barrel medic).